A 22-amino-acid chain; its full sequence is TNTPEQQCYLQAKCYIEFYVVV.

The Peptidase M12B domain occupies 14-22; it reads CYIEFYVVV.

This sequence belongs to the venom metalloproteinase (M12B) family. P-III subfamily. P-IIId sub-subfamily. In terms of assembly, heterotrimer; disulfide-linked. The heterotrimer consists of 1 metalloproteinase chain and 2 lectin chains. It depends on Zn(2+) as a cofactor. N-glycosylated. Expressed by the venom gland.

The protein resides in the secreted. Functionally, snake venom metalloproteinase that inhibits the classical complement pathway dose-dependently. It acts by binding to carbohydrates of IgG within the antibody-sensitized sheep erythrocytes (EA) complex, and thus prevents interaction of component C2 with immobilized C4b. Also induces cation-independent hemagglutination that can be prevented by D-galactose pretreatment. The sequence is that of Zinc metalloproteinase oxiagin from Naja oxiana (Central Asian cobra).